The sequence spans 577 residues: Arginine--tRNA ligase (577 aa).

The 'HIGH' region motif lies at 122-132; the sequence is PNVAKEMHVGH.

It belongs to the class-I aminoacyl-tRNA synthetase family. As to quaternary structure, monomer.

It localises to the cytoplasm. The catalysed reaction is tRNA(Arg) + L-arginine + ATP = L-arginyl-tRNA(Arg) + AMP + diphosphate. This Salmonella agona (strain SL483) protein is Arginine--tRNA ligase.